Reading from the N-terminus, the 196-residue chain is Anthranilate synthase component 2 (196 aa).

The region spanning 3-196 (VILIIDNYDS…RTVIRNFLRM (194 aa)) is the Glutamine amidotransferase type-1 domain. Residue 60 to 62 (GPG) participates in L-glutamine binding. Cys89 (nucleophile; for GATase activity) is an active-site residue. Residues Gln93 and 138 to 139 (SL) contribute to the L-glutamine site. Catalysis depends on for GATase activity residues His177 and Glu179.

Heterotetramer consisting of two non-identical subunits: a beta subunit (TrpG) and a large alpha subunit (TrpE).

The enzyme catalyses chorismate + L-glutamine = anthranilate + pyruvate + L-glutamate + H(+). The protein operates within amino-acid biosynthesis; L-tryptophan biosynthesis; L-tryptophan from chorismate: step 1/5. Functionally, part of a heterotetrameric complex that catalyzes the two-step biosynthesis of anthranilate, an intermediate in the biosynthesis of L-tryptophan. In the first step, the glutamine-binding beta subunit (TrpG) of anthranilate synthase (AS) provides the glutamine amidotransferase activity which generates ammonia as a substrate that, along with chorismate, is used in the second step, catalyzed by the large alpha subunit of AS (TrpE) to produce anthranilate. In the absence of TrpG, TrpE can synthesize anthranilate directly from chorismate and high concentrations of ammonia. The chain is Anthranilate synthase component 2 (trpG) from Methanothermobacter thermautotrophicus (strain ATCC 29096 / DSM 1053 / JCM 10044 / NBRC 100330 / Delta H) (Methanobacterium thermoautotrophicum).